The primary structure comprises 285 residues: G patch domain-containing protein 11 (285 aa).

Residues 51–87 (MLRQIREARRKEEKQQEANLKNRQKSLKEEEQERRDI) are a coiled coil. The interval 59-84 (RRKEEKQQEANLKNRQKSLKEEEQER) is disordered. The region spanning 95–141 (CENKGFALLQKMGYKSGQALGKSGGGIVEPIPLNIKTGKSGIGHEAS) is the G-patch domain. Ser141 carries the post-translational modification Phosphoserine. The residue at position 149 (Lys149) is an N6-acetyllysine. Positions 218–235 (EETEEDEEEKEQDEDEYK) are enriched in acidic residues. Residues 218–237 (EETEEDEEEKEQDEDEYKSE) are disordered.

Belongs to the GPATCH11 family.

It is found in the chromosome. It localises to the centromere. Its subcellular location is the kinetochore. This chain is G patch domain-containing protein 11 (GPATCH11), found in Homo sapiens (Human).